A 351-amino-acid chain; its full sequence is Rhodopsin (351 aa).

Residues 1-36 are Extracellular-facing; it reads MNGTEGPFFYIPMSNATGLVRSPYDYPQYYLVPPWG. Residues N2 and N15 are each glycosylated (N-linked (GlcNAc...) asparagine). A helical transmembrane segment spans residues 37–61; the sequence is YACLAAYMFLLILTGFPVNFLTLYV. Over 62-73 the chain is Cytoplasmic; that stretch reads TIEHKKLRSPLN. Residues 74–96 traverse the membrane as a helical segment; sequence YILLNLAVADLFMVIGGFTTTMW. Residues 97–110 are Extracellular-facing; sequence TSLNGYFVFGRMGC. The cysteines at positions 110 and 187 are disulfide-linked. The chain crosses the membrane as a helical span at residues 111–133; sequence NIEGFFATLGGEIALWSLVVLSM. A 'Ionic lock' involved in activated form stabilization motif is present at residues 134-136; it reads ERW. Over 134–152 the chain is Cytoplasmic; sequence ERWIVVCKPISNFRFGENH. The helical transmembrane segment at 153–173 threads the bilayer; sequence AVMGVAFSWFMAAACAVPPLV. At 174–202 the chain is on the extracellular side; that stretch reads GWSRYIPEGMQCSCGIDYYTRAEGFNNES. N200 carries an N-linked (GlcNAc...) asparagine glycan. A helical membrane pass occupies residues 203–224; it reads FVIYMFVVHFTCPLTIITFCYG. Residues 225 to 252 are Cytoplasmic-facing; sequence RLVCTVKEAAAQQQESETTQRAEREVTR. Residues 253 to 274 traverse the membrane as a helical segment; it reads MVIIMFVAFLACWVPYASVAWY. Over 275–286 the chain is Extracellular; sequence IFTHQGSEFGPV. Residues 287–308 form a helical membrane-spanning segment; the sequence is FMTIPAFFAKSSAVYNPVIYIC. Position 296 is an N6-(retinylidene)lysine (K296). The Cytoplasmic segment spans residues 309–351; that stretch reads LNKQFRHCMITTLCCGKNPFEEEEGSTTASKTEASSVCSVSPA. Residues C322 and C323 are each lipidated (S-palmitoyl cysteine). Positions 330 to 351 are disordered; it reads EEEGSTTASKTEASSVCSVSPA. The span at 334-351 shows a compositional bias: polar residues; it reads STTASKTEASSVCSVSPA.

Belongs to the G-protein coupled receptor 1 family. Opsin subfamily. Phosphorylated on some or all of the serine and threonine residues present in the C-terminal region. In terms of processing, contains one covalently linked retinal chromophore.

The protein localises to the membrane. Its subcellular location is the cell projection. It localises to the cilium. It is found in the photoreceptor outer segment. Its function is as follows. Photoreceptor required for image-forming vision at low light intensity. While most salt water fish species use retinal as chromophore, most freshwater fish use 3-dehydroretinal, or a mixture of retinal and 3-dehydroretinal. Light-induced isomerization of 11-cis to all-trans retinal triggers a conformational change that activates signaling via G-proteins. Subsequent receptor phosphorylation mediates displacement of the bound G-protein alpha subunit by arrestin and terminates signaling. The chain is Rhodopsin (rho) from Sardina pilchardus (European pilchard).